The sequence spans 129 residues: Small ribosomal subunit protein uS11 (129 aa).

Residues 108-129 (TPIPHNGTRPPKRVLKRLRLKK) are disordered. The segment covering 117-129 (PPKRVLKRLRLKK) has biased composition (basic residues).

This sequence belongs to the universal ribosomal protein uS11 family. In terms of assembly, part of the 30S ribosomal subunit. Interacts with proteins S7 and S18. Binds to IF-3.

Its function is as follows. Located on the platform of the 30S subunit, it bridges several disparate RNA helices of the 16S rRNA. Forms part of the Shine-Dalgarno cleft in the 70S ribosome. The protein is Small ribosomal subunit protein uS11 of Mycoplasmopsis synoviae (strain 53) (Mycoplasma synoviae).